A 227-amino-acid chain; its full sequence is Cytochrome c oxidase subunit 2 (227 aa).

Residues 1 to 14 lie on the Mitochondrial intermembrane side of the membrane; the sequence is MAHRAQVGLQDATS. The chain crosses the membrane as a helical span at residues 15–45; sequence PIMEELVIFHDHALMIIFLICFLVLYALFLT. Topologically, residues 46–59 are mitochondrial matrix; sequence LTTKLTNTNISDAQ. A helical membrane pass occupies residues 60 to 87; it reads EMETIWTTLPAIILILIALPSLRILYLT. The Mitochondrial intermembrane segment spans residues 88 to 227; the sequence is DEINDPSFTI…IFEMGPVFAL (140 aa). Positions 161, 196, 198, 200, 204, and 207 each coordinate Cu cation. Residue E198 participates in Mg(2+) binding.

Belongs to the cytochrome c oxidase subunit 2 family. Component of the cytochrome c oxidase (complex IV, CIV), a multisubunit enzyme composed of 14 subunits. The complex is composed of a catalytic core of 3 subunits MT-CO1, MT-CO2 and MT-CO3, encoded in the mitochondrial DNA, and 11 supernumerary subunits COX4I, COX5A, COX5B, COX6A, COX6B, COX6C, COX7A, COX7B, COX7C, COX8 and NDUFA4, which are encoded in the nuclear genome. The complex exists as a monomer or a dimer and forms supercomplexes (SCs) in the inner mitochondrial membrane with NADH-ubiquinone oxidoreductase (complex I, CI) and ubiquinol-cytochrome c oxidoreductase (cytochrome b-c1 complex, complex III, CIII), resulting in different assemblies (supercomplex SCI(1)III(2)IV(1) and megacomplex MCI(2)III(2)IV(2)). Found in a complex with TMEM177, COA6, COX18, COX20, SCO1 and SCO2. Interacts with TMEM177 in a COX20-dependent manner. Interacts with COX20. Interacts with COX16. It depends on Cu cation as a cofactor.

Its subcellular location is the mitochondrion inner membrane. The catalysed reaction is 4 Fe(II)-[cytochrome c] + O2 + 8 H(+)(in) = 4 Fe(III)-[cytochrome c] + 2 H2O + 4 H(+)(out). Component of the cytochrome c oxidase, the last enzyme in the mitochondrial electron transport chain which drives oxidative phosphorylation. The respiratory chain contains 3 multisubunit complexes succinate dehydrogenase (complex II, CII), ubiquinol-cytochrome c oxidoreductase (cytochrome b-c1 complex, complex III, CIII) and cytochrome c oxidase (complex IV, CIV), that cooperate to transfer electrons derived from NADH and succinate to molecular oxygen, creating an electrochemical gradient over the inner membrane that drives transmembrane transport and the ATP synthase. Cytochrome c oxidase is the component of the respiratory chain that catalyzes the reduction of oxygen to water. Electrons originating from reduced cytochrome c in the intermembrane space (IMS) are transferred via the dinuclear copper A center (CU(A)) of subunit 2 and heme A of subunit 1 to the active site in subunit 1, a binuclear center (BNC) formed by heme A3 and copper B (CU(B)). The BNC reduces molecular oxygen to 2 water molecules using 4 electrons from cytochrome c in the IMS and 4 protons from the mitochondrial matrix. The chain is Cytochrome c oxidase subunit 2 (MT-CO2) from Pongo pygmaeus (Bornean orangutan).